We begin with the raw amino-acid sequence, 507 residues long: UDP-glycosyltransferase 73D1 (507 aa).

Residues Ser-298, 359–361 (SPQ), 376–384 (HCGWNSTIE), and 398–401 (FAEQ) each bind UDP-alpha-D-glucose.

This sequence belongs to the UDP-glycosyltransferase family.

This chain is UDP-glycosyltransferase 73D1 (UGT73D1), found in Arabidopsis thaliana (Mouse-ear cress).